The following is a 179-amino-acid chain: Large ribosomal subunit protein uL5 (179 aa).

The protein belongs to the universal ribosomal protein uL5 family. In terms of assembly, part of the 50S ribosomal subunit; part of the 5S rRNA/L5/L18/L25 subcomplex. Contacts the 5S rRNA and the P site tRNA. Forms a bridge to the 30S subunit in the 70S ribosome.

This is one of the proteins that bind and probably mediate the attachment of the 5S RNA into the large ribosomal subunit, where it forms part of the central protuberance. In the 70S ribosome it contacts protein S13 of the 30S subunit (bridge B1b), connecting the 2 subunits; this bridge is implicated in subunit movement. Contacts the P site tRNA; the 5S rRNA and some of its associated proteins might help stabilize positioning of ribosome-bound tRNAs. The chain is Large ribosomal subunit protein uL5 from Paraburkholderia phymatum (strain DSM 17167 / CIP 108236 / LMG 21445 / STM815) (Burkholderia phymatum).